A 363-amino-acid chain; its full sequence is Phospho-N-acetylmuramoyl-pentapeptide-transferase (363 aa).

The next 10 membrane-spanning stretches (helical) occupy residues 27 to 47 (SGCA…PFIA), 76 to 96 (TMGG…WADL), 97 to 117 (TNGF…VGFA), 137 to 157 (LGCE…LTPP), 171 to 191 (VLLP…TGFG), 202 to 222 (GLAI…SYLV), 242 to 262 (LAVF…FNAP), 265 to 285 (AVFM…AVAV), 292 to 312 (VLCI…IQIF), and 340 to 360 (KIVI…LATL).

Belongs to the glycosyltransferase 4 family. MraY subfamily. The cofactor is Mg(2+).

It is found in the cell inner membrane. It catalyses the reaction UDP-N-acetyl-alpha-D-muramoyl-L-alanyl-gamma-D-glutamyl-meso-2,6-diaminopimeloyl-D-alanyl-D-alanine + di-trans,octa-cis-undecaprenyl phosphate = di-trans,octa-cis-undecaprenyl diphospho-N-acetyl-alpha-D-muramoyl-L-alanyl-D-glutamyl-meso-2,6-diaminopimeloyl-D-alanyl-D-alanine + UMP. It participates in cell wall biogenesis; peptidoglycan biosynthesis. In terms of biological role, catalyzes the initial step of the lipid cycle reactions in the biosynthesis of the cell wall peptidoglycan: transfers peptidoglycan precursor phospho-MurNAc-pentapeptide from UDP-MurNAc-pentapeptide onto the lipid carrier undecaprenyl phosphate, yielding undecaprenyl-pyrophosphoryl-MurNAc-pentapeptide, known as lipid I. The protein is Phospho-N-acetylmuramoyl-pentapeptide-transferase of Gluconobacter oxydans (strain 621H) (Gluconobacter suboxydans).